A 35-amino-acid chain; its full sequence is MLTKFETKSARVKGLSFHPKRPWILTSLHNGVIQL.

Oligomeric complex that consists of at least the alpha, beta, beta', gamma, delta, epsilon and zeta subunits. Interacts with SCYL1. Interacts with JAGN1. Interacts with TMEM41B. Interacts with SVEP1. Probably interacts with PEX11A. Gastric, duodenal and jejunal mucosa. Circulates in the blood. Seems to be confined to specific endocrine cells.

Its function is as follows. Xenin stimulates exocrine pancreatic secretion. It inhibits pentagastrin-stimulated secretion of acid, to induce exocrine pancreatic secretion and to affect small and large intestinal motility. In the gut, xenin interacts with the neurotensin receptor. The polypeptide is Coatomer subunit alpha (COPA) (Canis lupus familiaris (Dog)).